Reading from the N-terminus, the 287-residue chain is Pyridoxal kinase PdxY (287 aa).

Substrate-binding positions include S9 and T44 to Q45. ATP contacts are provided by residues D111, A143, E148, K181, and R208–V211. Substrate is bound at residue D223.

Belongs to the pyridoxine kinase family. PdxY subfamily. As to quaternary structure, homodimer. Mg(2+) is required as a cofactor.

The enzyme catalyses pyridoxal + ATP = pyridoxal 5'-phosphate + ADP + H(+). It functions in the pathway cofactor metabolism; pyridoxal 5'-phosphate salvage; pyridoxal 5'-phosphate from pyridoxal: step 1/1. Functionally, pyridoxal kinase involved in the salvage pathway of pyridoxal 5'-phosphate (PLP). Catalyzes the phosphorylation of pyridoxal to PLP. This is Pyridoxal kinase PdxY from Photorhabdus laumondii subsp. laumondii (strain DSM 15139 / CIP 105565 / TT01) (Photorhabdus luminescens subsp. laumondii).